Here is a 167-residue protein sequence, read N- to C-terminus: Peptidyl-prolyl cis-trans isomerase-like 3 (167 aa).

The PPIase cyclophilin-type domain occupies 1 to 160 (MSVTLHTTLG…EEVRIERVTV (160 aa)).

The protein belongs to the cyclophilin-type PPIase family. PPIL3 subfamily.

It catalyses the reaction [protein]-peptidylproline (omega=180) = [protein]-peptidylproline (omega=0). PPIases accelerate the folding of proteins. It catalyzes the cis-trans isomerization of proline imidic peptide bonds in oligopeptides. The sequence is that of Peptidyl-prolyl cis-trans isomerase-like 3 (cyp-10) from Neurospora crassa (strain ATCC 24698 / 74-OR23-1A / CBS 708.71 / DSM 1257 / FGSC 987).